Consider the following 248-residue polypeptide: Uracil-DNA glycosylase (248 aa).

Asp-85 serves as the catalytic Proton acceptor.

This sequence belongs to the uracil-DNA glycosylase (UDG) superfamily. UNG family.

The protein localises to the cytoplasm. It catalyses the reaction Hydrolyzes single-stranded DNA or mismatched double-stranded DNA and polynucleotides, releasing free uracil.. Its function is as follows. Excises uracil residues from the DNA which can arise as a result of misincorporation of dUMP residues by DNA polymerase or due to deamination of cytosine. This chain is Uracil-DNA glycosylase, found in Deinococcus deserti (strain DSM 17065 / CIP 109153 / LMG 22923 / VCD115).